Here is a 354-residue protein sequence, read N- to C-terminus: Uroporphyrinogen decarboxylase (354 aa).

Substrate is bound by residues 27–31 (RQAGR), D77, Y154, T209, and H327.

The protein belongs to the uroporphyrinogen decarboxylase family. As to quaternary structure, homodimer.

The protein resides in the cytoplasm. The enzyme catalyses uroporphyrinogen III + 4 H(+) = coproporphyrinogen III + 4 CO2. The protein operates within porphyrin-containing compound metabolism; protoporphyrin-IX biosynthesis; coproporphyrinogen-III from 5-aminolevulinate: step 4/4. Catalyzes the decarboxylation of four acetate groups of uroporphyrinogen-III to yield coproporphyrinogen-III. The chain is Uroporphyrinogen decarboxylase from Actinobacillus pleuropneumoniae serotype 5b (strain L20).